Consider the following 87-residue polypeptide: Small ribosomal subunit protein uS17 (87 aa).

The protein belongs to the universal ribosomal protein uS17 family. Part of the 30S ribosomal subunit.

In terms of biological role, one of the primary rRNA binding proteins, it binds specifically to the 5'-end of 16S ribosomal RNA. The chain is Small ribosomal subunit protein uS17 from Endomicrobium trichonymphae.